Reading from the N-terminus, the 424-residue chain is Isovaleryl-CoA dehydrogenase, mitochondrial (424 aa).

The N-terminal 30 residues, 1-30 (MATAVRLLGRRVSSWRLRPLPSPLAVPQRA), are a transit peptide targeting the mitochondrion. K56, K65, and K76 each carry N6-acetyllysine; alternate. N6-succinyllysine; alternate occurs at positions 56, 65, and 76. Residues 163–172 (LAMSEPNAGS) and 196–198 (WIT) contribute to the FAD site. Residue S172 coordinates substrate. 220 to 221 (SR) contributes to the substrate binding site. Position 239 is an N6-acetyllysine (K239). The residue at position 260 (K260) is an N6-acetyllysine; alternate. K260 is subject to N6-succinyllysine; alternate. Substrate is bound by residues Y275 and 282 to 285 (DLER). The Proton acceptor role is filled by E284. R310 provides a ligand contact to FAD. K316 is subject to N6-succinyllysine. FAD is bound by residues Q321 and 378 to 382 (QCLGG). Position 405 to 406 (405 to 406 (GG)) interacts with substrate. 407–409 (TSE) provides a ligand contact to FAD.

This sequence belongs to the acyl-CoA dehydrogenase family. As to quaternary structure, homotetramer. FAD serves as cofactor.

It localises to the mitochondrion matrix. It catalyses the reaction 3-methylbutanoyl-CoA + oxidized [electron-transfer flavoprotein] + H(+) = 3-methylbut-2-enoyl-CoA + reduced [electron-transfer flavoprotein]. It carries out the reaction pentanoyl-CoA + oxidized [electron-transfer flavoprotein] + H(+) = (2E)-pentenoyl-CoA + reduced [electron-transfer flavoprotein]. The catalysed reaction is hexanoyl-CoA + oxidized [electron-transfer flavoprotein] + H(+) = (2E)-hexenoyl-CoA + reduced [electron-transfer flavoprotein]. The enzyme catalyses butanoyl-CoA + oxidized [electron-transfer flavoprotein] + H(+) = (2E)-butenoyl-CoA + reduced [electron-transfer flavoprotein]. Its pathway is amino-acid degradation; L-leucine degradation; (S)-3-hydroxy-3-methylglutaryl-CoA from 3-isovaleryl-CoA: step 1/3. Functionally, catalyzes the conversion of isovaleryl-CoA/3-methylbutanoyl-CoA to 3-methylbut-2-enoyl-CoA as an intermediate step in the leucine (Leu) catabolic pathway. To a lesser extent, is also able to catalyze the oxidation of other saturated short-chain acyl-CoA thioesters as pentanoyl-CoA, hexenoyl-CoA and butenoyl-CoA. In Rattus norvegicus (Rat), this protein is Isovaleryl-CoA dehydrogenase, mitochondrial (Ivd).